Reading from the N-terminus, the 363-residue chain is Ribosomal RNA large subunit methyltransferase M (363 aa).

S-adenosyl-L-methionine contacts are provided by residues serine 190, 223-226, aspartate 242, aspartate 262, and aspartate 279; that span reads CPGG. Residue lysine 308 is the Proton acceptor of the active site.

This sequence belongs to the class I-like SAM-binding methyltransferase superfamily. RNA methyltransferase RlmE family. RlmM subfamily. As to quaternary structure, monomer.

The protein resides in the cytoplasm. It carries out the reaction cytidine(2498) in 23S rRNA + S-adenosyl-L-methionine = 2'-O-methylcytidine(2498) in 23S rRNA + S-adenosyl-L-homocysteine + H(+). Functionally, catalyzes the 2'-O-methylation at nucleotide C2498 in 23S rRNA. In Aliivibrio salmonicida (strain LFI1238) (Vibrio salmonicida (strain LFI1238)), this protein is Ribosomal RNA large subunit methyltransferase M.